The following is a 536-amino-acid chain: Cytochrome P450 monooxygenase fscF (536 aa).

The chain crosses the membrane as a helical span at residues 9 to 29; that stretch reads VSWLCALFTAIALYCIAVAFY. Cys-464 provides a ligand contact to heme.

Belongs to the cytochrome P450 family. Heme is required as a cofactor.

It localises to the membrane. Its pathway is secondary metabolite biosynthesis. In terms of biological role, cytochrome P450 monooxygenase; part of the fragmented gene cluster that mediates the biosynthesis of fusarochromene, a tryptophan-derived metabolite closely related to a group of mycotoxins including fusarochromanone. Within the pathway, fscF catalyzes the epoxidation of desacetylfusarochromene which opens the way to the production of fusarochromanones. The first step of the pathway is the epimerization of L-tryptophan to D-tryptophan in the presence of the NRPS-like tryptophan epimerase fscC. D-tryptophan is subsequently hydroxylated by the tryptophan 6-hydroxylase fscE to yield 6-hydroxytryptophan. The pyrrole ring undergoes cleavaged by the tryptophan 2,3-dioxygenase fscD and is finally converted to 4-hydroxykyrunenine by the hydrolase fscH. The NRPS-like oxidoreductase fscA reduces the carboxyl group to primary alcohol and the DMATS-type prenyltransferase fscG performs prenylation, followed by the formation of a chromene ring catalyzed by the oxidoreductase fscI, which leads to desacetylfusarochromene. Epoxidation by fscF and rearrangement reactions of chromene double bonds convert compound desacetylfusarochromene to fusarochromanones. Although specific acetyltransferases were not found near the fsc gene cluster, several predicted enzymes containing the N-acetyltransferase superfamily domain are present in the genome of F.equiseti. These predicted enzymes may have the potential to convert desacetylfusarochromene to fusarochromene. This is Cytochrome P450 monooxygenase fscF from Fusarium equiseti (Fusarium scirpi).